The following is a 156-amino-acid chain: SsrA-binding protein (156 aa).

The interval 135–156 (HALRERQDRREADRAMSERKDR) is disordered.

This sequence belongs to the SmpB family.

The protein localises to the cytoplasm. Required for rescue of stalled ribosomes mediated by trans-translation. Binds to transfer-messenger RNA (tmRNA), required for stable association of tmRNA with ribosomes. tmRNA and SmpB together mimic tRNA shape, replacing the anticodon stem-loop with SmpB. tmRNA is encoded by the ssrA gene; the 2 termini fold to resemble tRNA(Ala) and it encodes a 'tag peptide', a short internal open reading frame. During trans-translation Ala-aminoacylated tmRNA acts like a tRNA, entering the A-site of stalled ribosomes, displacing the stalled mRNA. The ribosome then switches to translate the ORF on the tmRNA; the nascent peptide is terminated with the 'tag peptide' encoded by the tmRNA and targeted for degradation. The ribosome is freed to recommence translation, which seems to be the essential function of trans-translation. The polypeptide is SsrA-binding protein (Kineococcus radiotolerans (strain ATCC BAA-149 / DSM 14245 / SRS30216)).